A 643-amino-acid chain; its full sequence is Hepatoma-derived growth factor-related protein 2 (643 aa).

In terms of domain architecture, PWWP spans 7-64 (PGDLVFAKMKGYPHWPARIDDVKDGAVKPPPNKYPIFFYGTHETAFLAPKDLFPYEKC). Disordered regions lie at residues 88-450 (PQAS…KKPE) and 548-643 (LESQ…NQTS). Positions 90-104 (ASYSLPPASVSSSDS) are enriched in low complexity. Residues 107–116 (PEEKSTARSD) are compositionally biased toward basic and acidic residues. Residues 176–187 (SEEENSDSDQDF) show a composition bias toward acidic residues. The segment covering 194–204 (PRIQRRTTNLG) has biased composition (polar residues). A compositionally biased stretch (basic and acidic residues) spans 209–231 (IFAESDSKSDESEDEKKEEEQKK). The segment covering 232 to 249 (SPSSSSASSPSLSSSDSE) has biased composition (low complexity). Basic and acidic residues-rich tracts occupy residues 290 to 353 (SVDR…DSSK), 373 to 382 (EDKKPVKEVK), and 417 to 450 (RPSE…KKPE). The stretch at 295 to 345 (SEWKKRDEERRRELEERRKKEQEEQLRRLREEEREEEERKKREKAEKGDKS) forms a coiled coil. The segment covering 549–559 (ESQQKTVQKVN) has biased composition (polar residues). Basic and acidic residues-rich tracts occupy residues 560-575 (TAEK…GKVE) and 608-622 (NKTE…HAEH).

The protein belongs to the HDGF family.

The protein localises to the nucleus. The protein resides in the cytoplasm. Its function is as follows. May act as a regulator of myogenesis. Promotes the repair of DNA double-strand breaks (DSBs) through the homologous recombination pathway by facilitating the recruitment of the DNA endonuclease RBBP8 to the DSBs. This chain is Hepatoma-derived growth factor-related protein 2 (hdgfl2), found in Xenopus tropicalis (Western clawed frog).